The chain runs to 170 residues: uncharacterized protein (170 aa).

A helical membrane pass occupies residues 96–116 (FSAISIGSFPIVLFLSLFFFD).

Its subcellular location is the membrane. This is an uncharacterized protein from Borreliella burgdorferi (strain ATCC 35210 / DSM 4680 / CIP 102532 / B31) (Borrelia burgdorferi).